We begin with the raw amino-acid sequence, 662 residues long: DNA ligase (662 aa).

NAD(+)-binding positions include 31 to 35 (DKDYD) and 79 to 80 (SL). The active-site N6-AMP-lysine intermediate is the Lys121. Residues Arg143, Glu177, and Lys313 each contribute to the NAD(+) site. Zn(2+) contacts are provided by Cys406, Cys409, Cys422, and Cys428. Residues 586–662 (VLESPFMGKT…LSEEEFENMI (77 aa)) enclose the BRCT domain.

The protein belongs to the NAD-dependent DNA ligase family. LigA subfamily. It depends on Mg(2+) as a cofactor. Requires Mn(2+) as cofactor.

It carries out the reaction NAD(+) + (deoxyribonucleotide)n-3'-hydroxyl + 5'-phospho-(deoxyribonucleotide)m = (deoxyribonucleotide)n+m + AMP + beta-nicotinamide D-nucleotide.. DNA ligase that catalyzes the formation of phosphodiester linkages between 5'-phosphoryl and 3'-hydroxyl groups in double-stranded DNA using NAD as a coenzyme and as the energy source for the reaction. It is essential for DNA replication and repair of damaged DNA. The protein is DNA ligase of Clostridium perfringens (strain SM101 / Type A).